The chain runs to 461 residues: Tubulin gamma-1 chain (461 aa).

Position 142 to 148 (142 to 148) interacts with GTP; the sequence is AGGTGSG.

The protein belongs to the tubulin family.

The protein resides in the cytoplasm. The protein localises to the cytoskeleton. It is found in the microtubule organizing center. Its subcellular location is the centrosome. Its function is as follows. Tubulin is the major constituent of microtubules. The gamma chain is found at microtubule organizing centers (MTOC) such as the spindle poles or the centrosome, suggesting that it is involved in the minus-end nucleation of microtubule assembly. The protein is Tubulin gamma-1 chain of Euplotoides octocarinatus (Freshwater ciliate).